Consider the following 146-residue polypeptide: Large ribosomal subunit protein uL15 (146 aa).

The segment covering 1 to 13 (MKLHELKPAEGSR) has biased composition (basic and acidic residues). Residues 1–57 (MKLHELKPAEGSRKVRNRVGRGTSSGNGKTSGRGQKGQKARSGVGLRPGFEGGQTPL) are disordered. Residues 23-35 (TSSGNGKTSGRGQ) are compositionally biased toward gly residues.

This sequence belongs to the universal ribosomal protein uL15 family. In terms of assembly, part of the 50S ribosomal subunit.

Functionally, binds to the 23S rRNA. This chain is Large ribosomal subunit protein uL15, found in Streptococcus thermophilus (strain ATCC BAA-491 / LMD-9).